A 288-amino-acid chain; its full sequence is ATP synthase subunit a (288 aa).

The next 6 membrane-spanning stretches (helical) occupy residues 47–67 (LDSMLWSIGLGIVFCALFWLV), 104–124 (LIAPLALTIFVWIFLMNLMDL), 157–177 (DPNITLGMSFSVFALIIYYSI), 199–219 (PIAKIILIPINFILEFVTLIA), 237–257 (LIFVLIALMPFWIQWALSVPW), and 258–278 (AIFHILIITLQAFVFMMLTIV).

This sequence belongs to the ATPase A chain family. In terms of assembly, F-type ATPases have 2 components, CF(1) - the catalytic core - and CF(0) - the membrane proton channel. CF(1) has five subunits: alpha(3), beta(3), gamma(1), delta(1), epsilon(1). CF(0) has three main subunits: a(1), b(2) and c(9-12). The alpha and beta chains form an alternating ring which encloses part of the gamma chain. CF(1) is attached to CF(0) by a central stalk formed by the gamma and epsilon chains, while a peripheral stalk is formed by the delta and b chains.

It is found in the cell inner membrane. Its function is as follows. Key component of the proton channel; it plays a direct role in the translocation of protons across the membrane. The sequence is that of ATP synthase subunit a from Psychrobacter sp. (strain PRwf-1).